A 147-amino-acid polypeptide reads, in one-letter code: Diaminohydroxyphosphoribosylamino-pyrimidine deaminase (147 aa).

The CMP/dCMP-type deaminase domain occupies 1–122; it reads MKDRFYMTRA…LYLRKKGISV (122 aa). Zn(2+) is bound at residue histidine 50. The active-site Proton donor is glutamate 52. Residues cysteine 75 and cysteine 84 each contribute to the Zn(2+) site.

The protein belongs to the cytidine and deoxycytidylate deaminase family. The cofactor is Zn(2+).

It catalyses the reaction 2,5-diamino-6-hydroxy-4-(5-phosphoribosylamino)-pyrimidine + H2O + H(+) = 5-amino-6-(5-phospho-D-ribosylamino)uracil + NH4(+). Its pathway is cofactor biosynthesis; riboflavin biosynthesis; 5-amino-6-(D-ribitylamino)uracil from GTP: step 2/4. This Buchnera aphidicola subsp. Schizaphis graminum (strain Sg) protein is Diaminohydroxyphosphoribosylamino-pyrimidine deaminase (ribD1).